We begin with the raw amino-acid sequence, 1142 residues long: Nucleoporin nup131 (1142 aa).

This sequence belongs to the nucleoporin Nup133 family. Component of the npc107-120 complex which consists of nup85, nup107, nup120, nup131, nup132 and seh1. Interacts with nup107.

The protein localises to the nucleus. Its function is as follows. Functions as a component of the nuclear pore complex (NPC). NPC components, collectively referred to as nucleoporins (NUPs), can play the role of both NPC structural components and of docking or interaction partners for transiently associated nuclear transport factors. Active directional transport is assured by both, a Phe-Gly (FG) repeat affinity gradient for these transport factors across the NPC and a transport cofactor concentration gradient across the nuclear envelope. The polypeptide is Nucleoporin nup131 (nup131) (Schizosaccharomyces pombe (strain 972 / ATCC 24843) (Fission yeast)).